The following is a 418-amino-acid chain: Light-independent protochlorophyllide reductase subunit N (418 aa).

The [4Fe-4S] cluster site is built by C17, C42, and C103.

Belongs to the BchN/ChlN family. Protochlorophyllide reductase is composed of three subunits; ChlL, ChlN and ChlB. Forms a heterotetramer of two ChlB and two ChlN subunits. The cofactor is [4Fe-4S] cluster.

The enzyme catalyses chlorophyllide a + oxidized 2[4Fe-4S]-[ferredoxin] + 2 ADP + 2 phosphate = protochlorophyllide a + reduced 2[4Fe-4S]-[ferredoxin] + 2 ATP + 2 H2O. Its pathway is porphyrin-containing compound metabolism; chlorophyll biosynthesis (light-independent). Component of the dark-operative protochlorophyllide reductase (DPOR) that uses Mg-ATP and reduced ferredoxin to reduce ring D of protochlorophyllide (Pchlide) to form chlorophyllide a (Chlide). This reaction is light-independent. The NB-protein (ChlN-ChlB) is the catalytic component of the complex. In Prochlorococcus marinus (strain NATL2A), this protein is Light-independent protochlorophyllide reductase subunit N.